The primary structure comprises 298 residues: Mitochondrial nicotinamide adenine dinucleotide transporter SLC25A51 (298 aa).

Basic and acidic residues predominate over residues 1–11; it reads MMDSEAHEKRP. The segment at 1–21 is disordered; that stretch reads MMDSEAHEKRPPMLTSSNQDL. 3 Solcar repeats span residues 28–108, 117–201, and 214–297; these read VGDM…LSRL, PEFA…IKES, and NDFI…LLKI. 6 consecutive transmembrane segments (helical) span residues 36–56, 85–105, 119–139, 180–200, 216–236, and 269–290; these read CGYCAAFNNVAITYPVQKILF, LPPLMQKTTTLALMFGLYEDL, FATRSVAALLAGTTEAILTPF, ILFRNGFGNVLFFGLRGPIKE, FICGGVLGAVLGFLSFPINVV, and LFRGAHLNYHRSLISWGIINAT.

The protein belongs to the mitochondrial carrier (TC 2.A.29) family.

The protein resides in the mitochondrion inner membrane. It catalyses the reaction NAD(+)(in) = NAD(+)(out). Functionally, mitochondrial membrane carrier protein that mediates the import of NAD(+) into mitochondria. Mitochondrial NAD(+) is required for glycolysis and mitochondrial respiration. Compared to SLC25A52, SLC25A51-mediated transport is essential for the import of NAD(+) in mitochondria. The transport mechanism, uniport or antiport, its electrogenicity and substrate selectivity, remain to be elucidated. In Mus musculus (Mouse), this protein is Mitochondrial nicotinamide adenine dinucleotide transporter SLC25A51.